The primary structure comprises 299 residues: MGLCKCPKRLVTNQFCFEHRVNVCEHCMVQSHPKCIVQSYLQWLRDSDYISNCTLCGTTLEQGDCVRLVCYHVFHWDCLNARQAALPANTAPRGHQCPACSVEIFPNANLVSPVADALKSFLSQVNWGRNGLGLALLSEEQSSSLKAIKPKVASQAAVSNMTKVHHIHSGGERERTKPNGHDAVSPHSVLLMDAFNPPSAGDYASSRRPLLPRQSPIGGTDRDDNKYQRRTPAELFSRWTRRFYAPSSRPPWRRTWFLVTAGILAFVLFVYLMAWLGRGGSDAVDEGWNNPNPQPNHYE.

The B box-type; degenerate zinc finger occupies 1–43 (MGLCKCPKRLVTNQFCFEHRVNVCEHCMVQSHPKCIVQSYLQW). Residues 53–101 (CTLCGTTLEQGDCVRLVCYHVFHWDCLNARQAALPANTAPRGHQCPACS) form an RING-type; atypical zinc finger. The disordered stretch occupies residues 200–231 (AGDYASSRRPLLPRQSPIGGTDRDDNKYQRRT). Position 215 is a phosphoserine (serine 215). The helical transmembrane segment at 256–276 (WFLVTAGILAFVLFVYLMAWL) threads the bilayer.

Belongs to the ZFPL1 family.

It localises to the membrane. The protein is Zinc finger protein-like 1 homolog of Drosophila melanogaster (Fruit fly).